The primary structure comprises 382 residues: uncharacterized protein (382 aa).

The next 12 helical transmembrane spans lie at 14 to 34 (GLLLLTLAIAVLNTLVPLWLA), 45 to 65 (VVSSSYFTGNLVGTLLTGYVI), 79 to 99 (FIFAAGCAGLGLMIGFWSWLA), 102 to 122 (FVAGIGCAMIWVVVESALMCS), 131 to 151 (LLAAYMMVYYVGTFLGQLLVS), 157 to 177 (LMSVLPWVTGLTLAGILPLLF), 204 to 224 (LGVNGCIISGIVLGSLYGLMP), 235 to 255 (ASIGFWMAVLVSAGILGQWPI), 270 to 290 (VQVFVVILGSIAMLSQAAMAP), 291 to 311 (ALFILGAAGFTLYPVAMAWAC), 325 to 345 (ALLLSYTVGSLLGPSFTAMLM), and 348 to 368 (FSDNLLFIMIASVSFIYLLML).

It belongs to the major facilitator superfamily. YcaD (TC 2.A.1.26) family.

The protein localises to the cell inner membrane. This is an uncharacterized protein from Escherichia coli O6:K15:H31 (strain 536 / UPEC).